Here is a 334-residue protein sequence, read N- to C-terminus: Pre-mRNA leakage protein 39 (334 aa).

In terms of assembly, interacts with MLP1 and MLP2.

Its subcellular location is the nucleus membrane. Involved in the nuclear retention of improperly spliced pre-mRNAs. This Saccharomyces cerevisiae (strain ATCC 204508 / S288c) (Baker's yeast) protein is Pre-mRNA leakage protein 39 (PML39).